The chain runs to 137 residues: Large ribosomal subunit protein uL16 (137 aa).

It belongs to the universal ribosomal protein uL16 family. In terms of assembly, part of the 50S ribosomal subunit.

In terms of biological role, binds 23S rRNA and is also seen to make contacts with the A and possibly P site tRNAs. This chain is Large ribosomal subunit protein uL16, found in Tolumonas auensis (strain DSM 9187 / NBRC 110442 / TA 4).